The chain runs to 145 residues: D-aminoacyl-tRNA deacylase (145 aa).

The short motif at 137-138 is the Gly-cisPro motif, important for rejection of L-amino acids element; it reads GP.

It belongs to the DTD family. As to quaternary structure, homodimer.

Its subcellular location is the cytoplasm. The catalysed reaction is glycyl-tRNA(Ala) + H2O = tRNA(Ala) + glycine + H(+). It catalyses the reaction a D-aminoacyl-tRNA + H2O = a tRNA + a D-alpha-amino acid + H(+). Its function is as follows. An aminoacyl-tRNA editing enzyme that deacylates mischarged D-aminoacyl-tRNAs. Also deacylates mischarged glycyl-tRNA(Ala), protecting cells against glycine mischarging by AlaRS. Acts via tRNA-based rather than protein-based catalysis; rejects L-amino acids rather than detecting D-amino acids in the active site. By recycling D-aminoacyl-tRNA to D-amino acids and free tRNA molecules, this enzyme counteracts the toxicity associated with the formation of D-aminoacyl-tRNA entities in vivo and helps enforce protein L-homochirality. This Shewanella frigidimarina (strain NCIMB 400) protein is D-aminoacyl-tRNA deacylase.